The following is a 252-amino-acid chain: 3-deoxy-manno-octulosonate cytidylyltransferase (252 aa).

This sequence belongs to the KdsB family.

It localises to the cytoplasm. The catalysed reaction is 3-deoxy-alpha-D-manno-oct-2-ulosonate + CTP = CMP-3-deoxy-beta-D-manno-octulosonate + diphosphate. Its pathway is nucleotide-sugar biosynthesis; CMP-3-deoxy-D-manno-octulosonate biosynthesis; CMP-3-deoxy-D-manno-octulosonate from 3-deoxy-D-manno-octulosonate and CTP: step 1/1. The protein operates within bacterial outer membrane biogenesis; lipopolysaccharide biosynthesis. In terms of biological role, activates KDO (a required 8-carbon sugar) for incorporation into bacterial lipopolysaccharide in Gram-negative bacteria. The sequence is that of 3-deoxy-manno-octulosonate cytidylyltransferase from Phocaeicola vulgatus (strain ATCC 8482 / DSM 1447 / JCM 5826 / CCUG 4940 / NBRC 14291 / NCTC 11154) (Bacteroides vulgatus).